A 236-amino-acid polypeptide reads, in one-letter code: Eukaryotic translation initiation factor 3 subunit J (236 aa).

The interval 1–86 is disordered; it reads MADDWESAAD…KEEEEQKRLA (86 aa). The span at 28–46 shows a compositional bias: acidic residues; it reads GEDDDEDVKESWEDEEEKK. 2 stretches are compositionally biased toward basic and acidic residues: residues 47–58 and 68–86; these read DEEKPTKTEAPV and AKLEEQERLKEEEEQKRLA. A coiled-coil region spans residues 61–115; it reads KPNKALKAKLEEQERLKEEEEQKRLAEMTPEEKLAEKLRLQKIQEESDLKSALET.

Belongs to the eIF-3 subunit J family. Component of the eukaryotic translation initiation factor 3 (eIF-3) complex. The eIF-3 complex interacts with pix.

It localises to the cytoplasm. In terms of biological role, component of the eukaryotic translation initiation factor 3 (eIF-3) complex, which is involved in protein synthesis of a specialized repertoire of mRNAs and, together with other initiation factors, stimulates binding of mRNA and methionyl-tRNAi to the 40S ribosome. The eIF-3 complex specifically targets and initiates translation of a subset of mRNAs involved in cell proliferation. This is Eukaryotic translation initiation factor 3 subunit J from Drosophila mojavensis (Fruit fly).